The chain runs to 604 residues: Glutamine--fructose-6-phosphate aminotransferase [isomerizing] (604 aa).

Cys-2 acts as the Nucleophile; for GATase activity in catalysis. Residues 2-218 enclose the Glutamine amidotransferase type-2 domain; sequence CGIVGVVGNT…DKELVIVKKD (217 aa). 2 consecutive SIS domains span residues 284-423 and 456-594; these read IIKS…ANGK and VEQL…VDKP. Lys-599 functions as the For Fru-6P isomerization activity in the catalytic mechanism.

As to quaternary structure, homodimer.

The protein resides in the cytoplasm. The enzyme catalyses D-fructose 6-phosphate + L-glutamine = D-glucosamine 6-phosphate + L-glutamate. Catalyzes the first step in hexosamine metabolism, converting fructose-6P into glucosamine-6P using glutamine as a nitrogen source. This chain is Glutamine--fructose-6-phosphate aminotransferase [isomerizing], found in Streptococcus agalactiae serotype V (strain ATCC BAA-611 / 2603 V/R).